Reading from the N-terminus, the 316-residue chain is Transaldolase (316 aa).

Catalysis depends on lysine 132, which acts as the Schiff-base intermediate with substrate.

This sequence belongs to the transaldolase family. Type 1 subfamily. As to quaternary structure, homodimer.

The protein resides in the cytoplasm. The catalysed reaction is D-sedoheptulose 7-phosphate + D-glyceraldehyde 3-phosphate = D-erythrose 4-phosphate + beta-D-fructose 6-phosphate. Its pathway is carbohydrate degradation; pentose phosphate pathway; D-glyceraldehyde 3-phosphate and beta-D-fructose 6-phosphate from D-ribose 5-phosphate and D-xylulose 5-phosphate (non-oxidative stage): step 2/3. Transaldolase is important for the balance of metabolites in the pentose-phosphate pathway. This chain is Transaldolase, found in Vibrio cholerae serotype O1 (strain ATCC 39541 / Classical Ogawa 395 / O395).